A 120-amino-acid chain; its full sequence is Large ribosomal subunit protein uL18 (120 aa).

Belongs to the universal ribosomal protein uL18 family. In terms of assembly, part of the 50S ribosomal subunit; part of the 5S rRNA/L5/L18/L25 subcomplex. Contacts the 5S and 23S rRNAs.

Functionally, this is one of the proteins that bind and probably mediate the attachment of the 5S RNA into the large ribosomal subunit, where it forms part of the central protuberance. The protein is Large ribosomal subunit protein uL18 of Herminiimonas arsenicoxydans.